A 279-amino-acid polypeptide reads, in one-letter code: Presqualene diphosphate synthase (279 aa).

The protein belongs to the phytoene/squalene synthase family. HpnD subfamily.

It carries out the reaction 2 (2E,6E)-farnesyl diphosphate = presqualene diphosphate + diphosphate. The protein operates within secondary metabolite biosynthesis; hopanoid biosynthesis. Its function is as follows. Involved in the biosynthesis of the hopanoid precursor squalene (SQ) from farnesyl diphosphate (FPP). Catalyzes the first step, the formation of presqualene diphosphate (PSPP) from two molecules of FPP. This chain is Presqualene diphosphate synthase, found in Sinorhizobium fredii (strain NBRC 101917 / NGR234).